Reading from the N-terminus, the 212-residue chain is Endonuclease III (212 aa).

In terms of domain architecture, HhH spans 108–127 (FKELVKLPGVGRKTANVVLN). Cys-187, Cys-194, Cys-197, and Cys-203 together coordinate [4Fe-4S] cluster.

It belongs to the Nth/MutY family. [4Fe-4S] cluster serves as cofactor.

The enzyme catalyses 2'-deoxyribonucleotide-(2'-deoxyribose 5'-phosphate)-2'-deoxyribonucleotide-DNA = a 3'-end 2'-deoxyribonucleotide-(2,3-dehydro-2,3-deoxyribose 5'-phosphate)-DNA + a 5'-end 5'-phospho-2'-deoxyribonucleoside-DNA + H(+). Its function is as follows. DNA repair enzyme that has both DNA N-glycosylase activity and AP-lyase activity. The DNA N-glycosylase activity releases various damaged pyrimidines from DNA by cleaving the N-glycosidic bond, leaving an AP (apurinic/apyrimidinic) site. The AP-lyase activity cleaves the phosphodiester bond 3' to the AP site by a beta-elimination, leaving a 3'-terminal unsaturated sugar and a product with a terminal 5'-phosphate. The protein is Endonuclease III of Rickettsia prowazekii (strain Madrid E).